The following is a 155-amino-acid chain: Small ribosomal subunit protein uS7 (155 aa).

This sequence belongs to the universal ribosomal protein uS7 family. As to quaternary structure, part of the 30S ribosomal subunit. Contacts proteins S9 and S11.

Its function is as follows. One of the primary rRNA binding proteins, it binds directly to 16S rRNA where it nucleates assembly of the head domain of the 30S subunit. Is located at the subunit interface close to the decoding center, probably blocks exit of the E-site tRNA. The chain is Small ribosomal subunit protein uS7 from Mesoplasma florum (strain ATCC 33453 / NBRC 100688 / NCTC 11704 / L1) (Acholeplasma florum).